A 1312-amino-acid polypeptide reads, in one-letter code: Retinoblastoma-like protein A (1312 aa).

Disordered regions lie at residues 1–67 (MMAH…NNEN), 168–231 (SSSS…KNSS), 336–359 (HNYN…NNNN), 536–611 (NNNN…IYGT), 987–1023 (NNNN…NNNN), 1168–1236 (KKND…NNTE), and 1249–1312 (EESP…RLKS). Positions 10–67 (TNINTKTTAPTTTTTEQQPEQQQQQPEQQQQEKQNNNNNNNNNNNNNNNINNNENNEN) are enriched in low complexity. Residues 36–117 (EQQQQEKQNN…TSSALNVDQD (82 aa)) adopt a coiled-coil conformation. Positions 168–179 (SSSSFQPDNNSK) are enriched in polar residues. Over residues 180 to 189 (IKGRKIRKTN) the composition is skewed to basic residues. Residues 195–230 (NNDSNEEEEETTTDTEEEEEEDTLLNENNNSINKNS) adopt a coiled-coil conformation. The segment covering 198 to 218 (SNEEEEETTTDTEEEEEEDTL) has biased composition (acidic residues). Composition is skewed to low complexity over residues 219-231 (LNEN…KNSS), 337-359 (NYNN…NNNN), and 536-595 (NNNN…SSSS). Low complexity-rich tracts occupy residues 1185–1234 (NNNN…NNNN), 1251–1275 (SPST…NNNK), and 1286–1305 (SPSS…SSSG).

It belongs to the retinoblastoma protein (RB) family.

It is found in the nucleus. Functionally, key regulator of entry into cell division. Directly involved in heterochromatin formation by maintaining overall chromatin structure and, in particular, that of constitutive heterochromatin by stabilizing histone methylation. Controls histone H4 'Lys-20' trimethylation. Probably acts as a transcription repressor by recruiting chromatin-modifying enzymes to promoters. Plays a dual role, regulating cell-cycle progression and transcriptional events leading to terminal differentiation. In the absence of a G1 phase, functions in late G2 controlling the expression of both S-phase and mitotic genes. Controls stalk/spore preference by suppressing the DIF response in cells destined for the spore pathway. DIF is a chlorinated hydroxyphenone made by cells of spore pathway that promotes stalk differentiation. This is Retinoblastoma-like protein A from Dictyostelium discoideum (Social amoeba).